The chain runs to 564 residues: Probable cysteine--tRNA ligase, mitochondrial (564 aa).

Residue cysteine 78 participates in Zn(2+) binding. Glycine 79 provides a ligand contact to L-cysteine. The 'HIGH' region signature appears at 80 to 90 (PTVYDHAHLGH). L-cysteine is bound at residue threonine 119. The short motif at 124-127 (KIIK) is the 'KIIK' region element. Zn(2+)-binding residues include cysteine 257, histidine 282, and glutamate 286. Histidine 282 serves as a coordination point for L-cysteine. The 'KMSKS' region motif lies at 317-321 (KMSKS). Lysine 320 serves as a coordination point for ATP.

The protein belongs to the class-I aminoacyl-tRNA synthetase family. It depends on Zn(2+) as a cofactor.

The protein resides in the mitochondrion. The catalysed reaction is tRNA(Cys) + L-cysteine + ATP = L-cysteinyl-tRNA(Cys) + AMP + diphosphate. The enzyme catalyses 2 L-cysteine = S-sulfanyl-L-cysteine + L-alanine. It catalyses the reaction S-sulfanyl-L-cysteine + L-cysteine = S-disulfanyl-L-cysteine + L-alanine. It carries out the reaction S-sulfanyl-L-cysteine + tRNA(Cys) + ATP = (S)-sulfanyl-L-cysteinyl-tRNA(Cys) + AMP + diphosphate. The catalysed reaction is S-disulfanyl-L-cysteine + tRNA(Cys) + ATP = (S)-disulfanyl-L-cysteinyl-tRNA(Cys) + AMP + diphosphate. Mitochondrial cysteine-specific aminoacyl-tRNA synthetase that catalyzes the ATP-dependent ligation of cysteine to tRNA(Cys). Functionally, in addition to its role as an aminoacyl-tRNA synthetase, has also cysteine persulfide synthase activity. Produces reactive persulfide species such as cysteine persulfide (CysSSH) from substrate cysteine and mediate direct incorporation of CysSSH into proteins during translations, resulting in protein persulfides and polysulfides. CysSSHs behave as potent antioxidants and cellular protectants. In Homo sapiens (Human), this protein is Probable cysteine--tRNA ligase, mitochondrial.